The sequence spans 788 residues: MSLTSRSLLATMISLALYGPAMANENNKLSEDVNDELALTSDNADEIELVRGVCIAPQDRSTDPNNDPIKVTADHAEALDKTKVTYTGDVVVQQGNRTIAADQAYLRQPENIVVAEGNVYFHDGTIEVDSERLQSDLDTEDSEMDHAVYNLTCEPGRGEARRITKTHAQGTQFYRMKDGTYTTCPAEDNSWRFSATTLEREGDSPFANLYNARFEVLDVPVFYLPYLRVPVGKERLTGFLYPSVSYGSRDGFEFETPFYWNIAPNYDLTLTPKYMSNRGLQLNTDFRYLTEFGQGSLKGEYLASDKAADNNDSRWAFNYSHNGTYKSNWLFDVDYSKTSDFNYFTDIDSSIGNREDNNLLQTAEVSYREQYWDSTLRVRDFQPLTETGQGSQYRLMPQLEFNYYRPNLPYELDFSMASSISSFANDASNKPDATRVHLEPTLTLPFATPWWSLTSEAKLLYTYYNQDLKSYSRDGIEETVSRTIPTARIHSGLYLERDTSIWGQDYTQSLEPQIQYLYVQDKDQSGIYNPVNDDGGGYDSTRLQQDYYGLFSDKTYSSVDYVAPANQFTVGASTRYFDGNFKERFTLSLGQIFYIDKPTVDDEVESYSATALETEFNYADWLFFKSSMQYDASDKEVQIANGAIEYRENGVYIQPNYRYVSSSYLDKYVTNPNSVNDDGDQDGISQLGLSTGFPLNGGLSVRADYFHDLNVNKMVEGQVGLTYRSACWLIGLTYNKYASSSLGSSNTEYDNNVSLTFSLLGLQGAKPFGASSDTSNAMSYGNSFSLNN.

Residues 1–23 (MSLTSRSLLATMISLALYGPAMA) form the signal peptide.

Belongs to the LptD family. In terms of assembly, component of the lipopolysaccharide transport and assembly complex. Interacts with LptE and LptA.

It is found in the cell outer membrane. In terms of biological role, together with LptE, is involved in the assembly of lipopolysaccharide (LPS) at the surface of the outer membrane. The chain is LPS-assembly protein LptD from Photobacterium profundum (strain SS9).